Reading from the N-terminus, the 390-residue chain is S-adenosylmethionine synthase (390 aa).

ATP is bound at residue His-17. Asp-19 is a binding site for Mg(2+). Residue Glu-45 participates in K(+) binding. Residues Glu-58 and Gln-101 each coordinate L-methionine. Positions Gln-101 to Thr-111 are flexible loop. Residues Asp-160–Lys-162, Arg-226–Phe-227, Asp-235, Arg-241–Lys-242, Ala-258, and Lys-262 each bind ATP. Asp-235 is an L-methionine binding site. Lys-266 provides a ligand contact to L-methionine.

This sequence belongs to the AdoMet synthase family. As to quaternary structure, homotetramer; dimer of dimers. Mg(2+) is required as a cofactor. It depends on K(+) as a cofactor.

It is found in the cytoplasm. The catalysed reaction is L-methionine + ATP + H2O = S-adenosyl-L-methionine + phosphate + diphosphate. It functions in the pathway amino-acid biosynthesis; S-adenosyl-L-methionine biosynthesis; S-adenosyl-L-methionine from L-methionine: step 1/1. Catalyzes the formation of S-adenosylmethionine (AdoMet) from methionine and ATP. The overall synthetic reaction is composed of two sequential steps, AdoMet formation and the subsequent tripolyphosphate hydrolysis which occurs prior to release of AdoMet from the enzyme. The chain is S-adenosylmethionine synthase from Anaeromyxobacter dehalogenans (strain 2CP-1 / ATCC BAA-258).